Here is a 164-residue protein sequence, read N- to C-terminus: UPF0304 protein MS2240 (164 aa).

This sequence belongs to the UPF0304 family.

The chain is UPF0304 protein MS2240 from Mannheimia succiniciproducens (strain KCTC 0769BP / MBEL55E).